A 125-amino-acid chain; its full sequence is Snaclec B7 (125 aa).

3 cysteine pairs are disulfide-bonded: C2–C13, C30–C119, and C96–C111. A C-type lectin domain is found at 9–120; that stretch reads HEGHCYKVFK…CNISQYFVCQ (112 aa). A glycan (N-linked (GlcNAc...) asparagine) is linked at N112.

This sequence belongs to the snaclec family. Heterodimer; disulfide-linked. Expressed by the venom gland.

It localises to the secreted. Interferes with one step of hemostasis (modulation of platelet aggregation, or coagulation cascade, for example). The chain is Snaclec B7 from Macrovipera lebetinus (Levantine viper).